Consider the following 119-residue polypeptide: Ribonuclease P protein component (119 aa).

The protein belongs to the RnpA family. Consists of a catalytic RNA component (M1 or rnpB) and a protein subunit.

The enzyme catalyses Endonucleolytic cleavage of RNA, removing 5'-extranucleotides from tRNA precursor.. Its function is as follows. RNaseP catalyzes the removal of the 5'-leader sequence from pre-tRNA to produce the mature 5'-terminus. It can also cleave other RNA substrates such as 4.5S RNA. The protein component plays an auxiliary but essential role in vivo by binding to the 5'-leader sequence and broadening the substrate specificity of the ribozyme. In Listeria welshimeri serovar 6b (strain ATCC 35897 / DSM 20650 / CCUG 15529 / CIP 8149 / NCTC 11857 / SLCC 5334 / V8), this protein is Ribonuclease P protein component.